The primary structure comprises 323 residues: PI-PLC X domain-containing protein 1 (323 aa).

The PI-PLC X-box domain occupies 30-206 (RLWDVPLHHL…QVIVSYEDES (177 aa)).

As to expression, widely expressed.

It is found in the cytoplasm. This Homo sapiens (Human) protein is PI-PLC X domain-containing protein 1 (PLCXD1).